A 415-amino-acid polypeptide reads, in one-letter code: Gamma-glutamyl phosphate reductase (415 aa).

Belongs to the gamma-glutamyl phosphate reductase family.

It localises to the cytoplasm. The catalysed reaction is L-glutamate 5-semialdehyde + phosphate + NADP(+) = L-glutamyl 5-phosphate + NADPH + H(+). The protein operates within amino-acid biosynthesis; L-proline biosynthesis; L-glutamate 5-semialdehyde from L-glutamate: step 2/2. Its function is as follows. Catalyzes the NADPH-dependent reduction of L-glutamate 5-phosphate into L-glutamate 5-semialdehyde and phosphate. The product spontaneously undergoes cyclization to form 1-pyrroline-5-carboxylate. The sequence is that of Gamma-glutamyl phosphate reductase from Clostridium perfringens (strain ATCC 13124 / DSM 756 / JCM 1290 / NCIMB 6125 / NCTC 8237 / Type A).